Here is a 1409-residue protein sequence, read N- to C-terminus: DNA-directed RNA polymerase subunit beta' (1409 aa).

Residues cysteine 70, cysteine 72, cysteine 85, and cysteine 88 each contribute to the Zn(2+) site. Positions 461, 463, and 465 each coordinate Mg(2+). Zn(2+) is bound by residues cysteine 820, cysteine 894, cysteine 901, and cysteine 904.

This sequence belongs to the RNA polymerase beta' chain family. The RNAP catalytic core consists of 2 alpha, 1 beta, 1 beta' and 1 omega subunit. When a sigma factor is associated with the core the holoenzyme is formed, which can initiate transcription. Requires Mg(2+) as cofactor. The cofactor is Zn(2+).

It carries out the reaction RNA(n) + a ribonucleoside 5'-triphosphate = RNA(n+1) + diphosphate. Functionally, DNA-dependent RNA polymerase catalyzes the transcription of DNA into RNA using the four ribonucleoside triphosphates as substrates. The polypeptide is DNA-directed RNA polymerase subunit beta' (Ralstonia nicotianae (strain ATCC BAA-1114 / GMI1000) (Ralstonia solanacearum)).